We begin with the raw amino-acid sequence, 255 residues long: 14-3-3-like protein GF14 psi (255 aa).

Residue Ser66 is modified to Phosphoserine. Residue Thr162 is modified to Phosphothreonine. Position 189 is a phosphoserine (Ser189). Residues Thr210 and Thr238 each carry the phosphothreonine modification.

The protein belongs to the 14-3-3 family. In terms of assembly, component of a DNA binding complex that binds to the G box. Interacts with IDH3, AGT3, GLN1-1, GLN1-2, GLN1-4, SAM1, SAM2, MDH1, METK3 and MDH2. Binds to 1-aminocyclopropane-1-carboxylate synthases (ACS) such as ACS2, ACS5, ACS6, ACS8, and ACS11. Interacts with FD. Interacts with DREB1A and DREB1B in the nucleus. Interacts with CINV1.

It localises to the cytoplasm. It is found in the nucleus. Its function is as follows. Is associated with a DNA binding complex that binds to the G box, a well-characterized cis-acting DNA regulatory element found in plant genes. Involved in the regulation of nutrient metabolism. Reciprocal negative transcription regulation of miR396. Negative regulator of constitutive freezing tolerance and cold acclimation by controlling cold-induced gene expression partially through an ethylene (ET)-dependent pathway; prevents ethylene (ET) biosynthesis, probably by binding 1-aminocyclopropane-1-carboxylate synthases (ACS) to reduce their stability, thus contributing to establish adequate ET levels under both standard and low-temperature conditions. This Arabidopsis thaliana (Mouse-ear cress) protein is 14-3-3-like protein GF14 psi.